Here is a 71-residue protein sequence, read N- to C-terminus: Exodeoxyribonuclease 7 small subunit (71 aa).

It belongs to the XseB family. Heterooligomer composed of large and small subunits.

It is found in the cytoplasm. It carries out the reaction Exonucleolytic cleavage in either 5'- to 3'- or 3'- to 5'-direction to yield nucleoside 5'-phosphates.. Bidirectionally degrades single-stranded DNA into large acid-insoluble oligonucleotides, which are then degraded further into small acid-soluble oligonucleotides. In Clostridium botulinum (strain 657 / Type Ba4), this protein is Exodeoxyribonuclease 7 small subunit.